Here is a 234-residue protein sequence, read N- to C-terminus: Triggering receptor expressed on myeloid cells 1 (234 aa).

The first 20 residues, 1 to 20 (MRKTRLWGLLWMLFVSELRA), serve as a signal peptide directing secretion. The Extracellular portion of the chain corresponds to 21–205 (ATKLTEEKYE…TDIIRVPVFN (185 aa)). The region spanning 26–134 (EEKYELKEGQ…LFDRIRLVVT (109 aa)) is the Ig-like V-type domain. A disulfide bond links C41 and C113. N-linked (GlcNAc...) asparagine glycans are attached at residues N146, N191, and N194. The chain crosses the membrane as a helical span at residues 206 to 226 (IVILLAGGFLSKSLVFSVLFA). The Cytoplasmic segment spans residues 227–234 (VTLRSFVP).

In terms of assembly, monomer. Homomultimer; when activated. Interacts with TYROBP/DAP12. Interacts with TLR4. Post-translationally, glycosylated. Mostly expressed by immune cells of the myeloid lineage, such as monocytes, macrophages, neutrophils and dendritic cells. Expression is associated with a mature stage of myeloid development. Highly expressed in adult liver, lung and spleen than in corresponding fetal tissue. Also expressed in the lymph node, placenta, spinal cord and heart tissues. Isoform 2 was detected in the lung, liver and mature monocytes.

It is found in the cell membrane. The protein resides in the secreted. Functionally, cell surface receptor that plays important roles in innate and adaptive immunity by amplifying inflammatory responses. Upon activation by various ligands such as PGLYRP1, HMGB1 or HSP70, multimerizes and forms a complex with transmembrane adapter TYROBP/DAP12. In turn, initiates a SYK-mediated cascade of tyrosine phosphorylation, activating multiple downstream mediators such as BTK, MAPK1, MAPK3 or phospholipase C-gamma. This cascade promotes the neutrophil- and macrophage-mediated release of pro-inflammatory cytokines and/or chemokines, as well as their migration and thereby amplifies inflammatory responses that are triggered by bacterial and fungal infections. By also promoting the amplification of inflammatory signals that are initially triggered by Toll-like receptor (TLR) and NOD-like receptor engagement, plays a major role in the pathophysiology of acute and chronic inflammatory diseases of different etiologies including septic shock and atherosclerosis. Its function is as follows. Acts as a decoy receptor, counterbalancing TREM1 pro-inflammatory activity through the neutralization of its ligand. This Homo sapiens (Human) protein is Triggering receptor expressed on myeloid cells 1 (TREM1).